Consider the following 122-residue polypeptide: Proteasome assembly chaperone 3 (122 aa).

At Met-1 the chain carries N-acetylmethionine.

It belongs to the PSMG3 family. As to quaternary structure, homodimer. Interacts directly with alpha and beta subunits of the 20S proteasome but dissociates before the formation of half-proteasomes, probably upon recruitment of POMP. Interacts with PSMG4.

Chaperone protein which promotes assembly of the 20S proteasome. May cooperate with PSMG1-PSMG2 heterodimers to orchestrate the correct assembly of proteasomes. The chain is Proteasome assembly chaperone 3 (Psmg3) from Mus musculus (Mouse).